The following is a 414-amino-acid chain: Protein FAM81B (414 aa).

Polar residues predominate over residues 1-13; sequence MTSETDINKSASP. The disordered stretch occupies residues 1–43; the sequence is MTSETDINKSASPTAAAKEQPEEPDGPLPGSASEQEKKVRFSP. Coiled-coil stretches lie at residues 70–94, 121–149, 188–223, and 266–414; these read NTQR…LEQA, LLEN…QIKA, KLSG…NLDT, and LNLY…LQES.

Belongs to the FAM81 family.

The sequence is that of Protein FAM81B (FAM81B) from Bos taurus (Bovine).